The primary structure comprises 118 residues: MALSPRDTTKRRAQRVRTRLRKVANGRPRLSVFRSAKNIYAQVIDDERGVTLAAASSLEGEKKDKGSDKDAAARVGALVAQRAIEKGVKDVVFDRGGYLYHGRVKALADAAREAGLNF.

This sequence belongs to the universal ribosomal protein uL18 family. As to quaternary structure, part of the 50S ribosomal subunit; part of the 5S rRNA/L5/L18/L25 subcomplex. Contacts the 5S and 23S rRNAs.

Functionally, this is one of the proteins that bind and probably mediate the attachment of the 5S RNA into the large ribosomal subunit, where it forms part of the central protuberance. This is Large ribosomal subunit protein uL18 from Phenylobacterium zucineum (strain HLK1).